The sequence spans 393 residues: Chorismate synthase (393 aa).

Positions 48 and 54 each coordinate NADP(+). FMN is bound by residues Arg-125–Ser-127, Asn-238–Ala-239, Gly-278, Lys-293–Ser-297, and Arg-319. The segment at Ala-355 to Ala-393 is disordered.

This sequence belongs to the chorismate synthase family. Homotetramer. FMNH2 serves as cofactor.

It carries out the reaction 5-O-(1-carboxyvinyl)-3-phosphoshikimate = chorismate + phosphate. It participates in metabolic intermediate biosynthesis; chorismate biosynthesis; chorismate from D-erythrose 4-phosphate and phosphoenolpyruvate: step 7/7. Catalyzes the anti-1,4-elimination of the C-3 phosphate and the C-6 proR hydrogen from 5-enolpyruvylshikimate-3-phosphate (EPSP) to yield chorismate, which is the branch point compound that serves as the starting substrate for the three terminal pathways of aromatic amino acid biosynthesis. This reaction introduces a second double bond into the aromatic ring system. This Nitrosospira multiformis (strain ATCC 25196 / NCIMB 11849 / C 71) protein is Chorismate synthase.